A 209-amino-acid polypeptide reads, in one-letter code: Uracil phosphoribosyltransferase (209 aa).

Residues arginine 79, arginine 104, and 131–139 (DPMLATGGS) contribute to the 5-phospho-alpha-D-ribose 1-diphosphate site. Uracil contacts are provided by residues isoleucine 194 and 199–201 (GDA). Residue aspartate 200 participates in 5-phospho-alpha-D-ribose 1-diphosphate binding.

The protein belongs to the UPRTase family. It depends on Mg(2+) as a cofactor.

It carries out the reaction UMP + diphosphate = 5-phospho-alpha-D-ribose 1-diphosphate + uracil. The protein operates within pyrimidine metabolism; UMP biosynthesis via salvage pathway; UMP from uracil: step 1/1. With respect to regulation, allosterically activated by GTP. Functionally, catalyzes the conversion of uracil and 5-phospho-alpha-D-ribose 1-diphosphate (PRPP) to UMP and diphosphate. The polypeptide is Uracil phosphoribosyltransferase (Clostridium acetobutylicum (strain ATCC 824 / DSM 792 / JCM 1419 / IAM 19013 / LMG 5710 / NBRC 13948 / NRRL B-527 / VKM B-1787 / 2291 / W)).